The chain runs to 1235 residues: ATP-dependent helicase/nuclease subunit A (1235 aa).

Positions 12–482 (TLWTDDQWKA…IDLSQNFRSR (471 aa)) constitute a UvrD-like helicase ATP-binding domain. Residue 33-40 (AAAGSGKT) coordinates ATP. In terms of domain architecture, UvrD-like helicase C-terminal spans 509–800 (AAELTLGANF…RMMTIHASKG (292 aa)).

It belongs to the helicase family. AddA subfamily. As to quaternary structure, heterodimer of AddA and AddB/RexB. Requires Mg(2+) as cofactor.

The enzyme catalyses Couples ATP hydrolysis with the unwinding of duplex DNA by translocating in the 3'-5' direction.. It catalyses the reaction ATP + H2O = ADP + phosphate + H(+). Its function is as follows. The heterodimer acts as both an ATP-dependent DNA helicase and an ATP-dependent, dual-direction single-stranded exonuclease. Recognizes the chi site generating a DNA molecule suitable for the initiation of homologous recombination. The AddA nuclease domain is required for chi fragment generation; this subunit has the helicase and 3' -&gt; 5' nuclease activities. This chain is ATP-dependent helicase/nuclease subunit A, found in Listeria welshimeri serovar 6b (strain ATCC 35897 / DSM 20650 / CCUG 15529 / CIP 8149 / NCTC 11857 / SLCC 5334 / V8).